The chain runs to 467 residues: MFKSVVYSVLAAALVNAGTIPLGELADVAKIGTQEDIFPFLGGAGPYFSFPGDYGISRDLPEGCEMKQLQMLARHGERYPTYSKGATIMKTWYKLSNYTRQFNGSLSFLNDDYEFFIRDDDDLEMETTFANSDNVLNPYTGEMDAKRHAREFLAQYGYMFENQTSFPIFAASSERVHDTAQYFIDGLGDQFNISLQTVSEAMSAGANTLSAGNACPGWDEDANDDILDKYDTTYLDDIAKRLNKENKGLNLTSKDANTLFAWCAYELNARGYSDVCDIFTEDELVRYSYGQDLVSFYQDGPGYDMIRSVGANLFNATLKLLKQSETQDLKVWLSFTHDTDILNYLTTAGIIDDKNNLTAEYVPFMGNTFHKSWYVPQGARVYTEKFQCSNDTYVRYVINDAVVPIETCSTGPGFSCEINDFYDYAEKRVAGTDFLKVCNVSSVSNVTELTFYWDWNTTHYNDTLLKQ.

The signal sequence occupies residues 1 to 17 (MFKSVVYSVLAAALVNA). H75 serves as the catalytic Nucleophile. Residues N97, N103, N162, N192, N250, and N315 are each glycosylated (N-linked (GlcNAc...) asparagine). D338 serves as the catalytic Proton donor. Residues N356, N390, N439, N445, N456, and N461 are each glycosylated (N-linked (GlcNAc...) asparagine).

It belongs to the histidine acid phosphatase family.

The enzyme catalyses a phosphate monoester + H2O = an alcohol + phosphate. This chain is Constitutive acid phosphatase (PHO3), found in Saccharomyces cerevisiae (strain ATCC 204508 / S288c) (Baker's yeast).